We begin with the raw amino-acid sequence, 200 residues long: Cuticle protein 19.8 (200 aa).

Repeat copies occupy residues 20 to 23 (AAPA), 26 to 29 (AAPA), and 43 to 46 (AAPA). The Chitin-binding type R&amp;R domain occupies 56–127 (HPQYSYGYSV…EPGVHAPIAA (72 aa)). The interval 70–89 (TGDSKSQQESRDGDVVQGSY) is disordered. Repeat copies occupy residues 126-129 (AAPV), 144-147 (AAPA), 150-153 (AAPV), 159-162 (AAPA), and 177-180 (AAPA).

In terms of biological role, component of the cuticle of migratory locust which contains more than 100 different structural proteins. This is Cuticle protein 19.8 from Locusta migratoria (Migratory locust).